Here is a 298-residue protein sequence, read N- to C-terminus: Replication protein A 32 kDa subunit B (298 aa).

Residues 89 to 163 (VRLVGRMLNK…QVVAYSVRRI (75 aa)) constitute a DNA-binding region (OB).

It belongs to the replication factor A protein 2 family. In terms of assembly, heterotrimer of RPA1, RPA2 and RPA3 (canonical replication protein A complex). Interacts with RPA1A and RPA3. In terms of processing, phosphorylated in a cell-cycle-dependent manner (from the S phase until mitosis). In response to DNA damage, recruited to DNA-repair nuclear foci, as a hypophosphorylated form.

The protein localises to the nucleus. In terms of biological role, component of the replication protein A complex (RPA) required for DNA recombination, repair and replication. The activity of RPA is mediated by single-stranded DNA binding and protein interactions. The protein is Replication protein A 32 kDa subunit B (RPA2B) of Oryza sativa subsp. japonica (Rice).